We begin with the raw amino-acid sequence, 392 residues long: ATP phosphoribosyltransferase regulatory subunit (392 aa).

Belongs to the class-II aminoacyl-tRNA synthetase family. HisZ subfamily. As to quaternary structure, heteromultimer composed of HisG and HisZ subunits.

It localises to the cytoplasm. The protein operates within amino-acid biosynthesis; L-histidine biosynthesis; L-histidine from 5-phospho-alpha-D-ribose 1-diphosphate: step 1/9. Required for the first step of histidine biosynthesis. May allow the feedback regulation of ATP phosphoribosyltransferase activity by histidine. The sequence is that of ATP phosphoribosyltransferase regulatory subunit from Prochlorococcus marinus (strain MIT 9211).